A 1322-amino-acid polypeptide reads, in one-letter code: MAATVRFGLLVAMFQAMSRDRTAAKKRARLRALLDRAYGPGGRDDYFSALRLVLPGLDRERGSYGLKEAALASVLVDALGIAKDSPDAVRLTNWRRGGGFRNAGNFALVAAEVLQRRQGMTSGGLTIKEVNDALDRLAATENSVCLESEKLLLILDRSEKASILSSLIKKTNALEMKWLLMIILKDLKLGISEKSVFHEFHPDAEDLFNVTCDLRLVCEKLNDRSQRHKRQDIEVGKAVRPQLSMRVNNASSAWKKLHGKQVVAECKFDGDRIQIHKNGEEIHFFSRSFLDHSEYAPGMSKVIIENILVDRCILDGEMLVWDTVLNRFAEFGSNQEIAKAAKEGLETDRQLCCILEWIASYVLALCVNILSCQDFFFSNKRESYVAFDILYAGDTSVIHQSLTERHEILQKVVRPLKGHLEILVPTGGLNIHRPPDEPCWSILAHSLDDVEKFFKDTVDNRFFPTSPNTDELSNLSISLMIQFRFSDYSICYVLREEGIILKDLESKWEPGDRSGKWLKLKPDYIHAGADLDVIIIGGYYGSGRRGGEVAQFLVGLAVPSDDNSYPKRFLSFCRVGTGLSDEELDALVTKLKPHFRKNEYPKKPPRFYEVTNHSKERPDVWIESPDKQSVRFRKHLIYCITKCRSVIISITSDIRTIKSEVFAAPYSLRFPRIQRLRYDKPWHECLDVQAFVDIVHSSNGTTHRAADDDNDLKNVKNGGSFSMNLNDSVTHCIAAEKKATRQGRIIHYSWILDCCKEKRLLHLQPKFDPCLQPMHKFPEEIDSYADYFYWDIDISDLKQIFSNMDRAVVDSNMVHHYKKKYCADERFCFFQGCCVYFYHAPLVNADYNVISDLALKRVKQDLTMHGGQVCSILAPATHLIIVSVLQAYNFDMLYKSLPPAERRYLHDKRLQVVSNKWLEDSVEKQTRLPETTYSLKPDTLEEIEIERSEETVQPCNDKLEENEKADTSHVKHAPRKRGRPSSSASRTAKPAPRPVRRTRARRGNQHAKIDDVEPEESDHGETGLDDQIPDTDNISKMEVDSFDKDQVSARPVRRTRARRGKQHAKIDYGQSEESDPGETGQDDQRLDADYISKMEEDSSDRDQGAHPTAPRVVRRSRAQRGKWLAKIDRETGPGETGQDDKKLNADSISKMEEHAHDKDQEPPPGAQLITLDEQEPKGIKSSTTETPSSPKHERNQTVLRRDTAETTSSATCEKMEQMVDPLHAMLLDMIPSLGQMKTDVGNRVAEAKAETNPPWVGSSTSSYVAPVPQASASSASSSGVPAPHAGSSTQSTGVPAPDPTAGAPKKKKVSYKDVAGALLKDW.

ATP is bound by residues Glu265, Lys267, Arg272, Arg287, Glu317, Phe387, Glu497, Lys502, Arg513, Lys519, and Lys521. Lys267 acts as the N6-AMP-lysine intermediate in catalysis. Position 317 (Glu317) interacts with Mg(2+). Position 497 (Glu497) interacts with Mg(2+). 2 consecutive BRCT domains span residues Leu686–Asp768 and Glu825–Leu935. Disordered regions lie at residues Ile945 to Cys1212 and Ala1245 to Ser1310. Basic and acidic residues predominate over residues Asp957–His969. 2 stretches are compositionally biased toward basic residues: residues Val970–Arg979 and Pro994–Gln1005. 2 stretches are compositionally biased toward basic and acidic residues: residues Ala1007 to Thr1022 and Asn1033 to Val1047. The segment covering Pro1051 to His1063 has biased composition (basic residues). Composition is skewed to basic and acidic residues over residues Asp1082 to Gly1104, Ala1125 to Glu1161, and Pro1190 to Ala1204. The segment covering Ser1261–Ser1288 has biased composition (low complexity).

This sequence belongs to the ATP-dependent DNA ligase family. Mg(2+) serves as cofactor.

It is found in the nucleus. It catalyses the reaction ATP + (deoxyribonucleotide)n-3'-hydroxyl + 5'-phospho-(deoxyribonucleotide)m = (deoxyribonucleotide)n+m + AMP + diphosphate.. DNA ligase involved in DNA non-homologous end joining (NHEJ); required for double-strand break (DSB) repair. The sequence is that of Putative DNA ligase 4 (LIG4) from Oryza sativa subsp. japonica (Rice).